The sequence spans 63 residues: Small ribosomal subunit protein eS17 (63 aa).

This sequence belongs to the eukaryotic ribosomal protein eS17 family.

This Methanococcus aeolicus (strain ATCC BAA-1280 / DSM 17508 / OCM 812 / Nankai-3) protein is Small ribosomal subunit protein eS17.